Reading from the N-terminus, the 508-residue chain is ATP synthase subunit alpha, chloroplastic (508 aa).

173–180 (GDRQTGKT) serves as a coordination point for ATP.

The protein belongs to the ATPase alpha/beta chains family. F-type ATPases have 2 components, CF(1) - the catalytic core - and CF(0) - the membrane proton channel. CF(1) has five subunits: alpha(3), beta(3), gamma(1), delta(1), epsilon(1). CF(0) has four main subunits: a, b, b' and c.

The protein resides in the plastid. It localises to the chloroplast thylakoid membrane. It catalyses the reaction ATP + H2O + 4 H(+)(in) = ADP + phosphate + 5 H(+)(out). Produces ATP from ADP in the presence of a proton gradient across the membrane. The alpha chain is a regulatory subunit. The sequence is that of ATP synthase subunit alpha, chloroplastic from Chara vulgaris (Common stonewort).